Here is a 237-residue protein sequence, read N- to C-terminus: uncharacterized protein (237 aa).

The GP-PDE domain occupies 4-237 (QFLIAHRGYS…VKFQIAAQLY (234 aa)).

This sequence to glycerophosphoryl diester phosphodiesterases (EC 3.1.4.46). It to M.genitalium MG293.

This is an uncharacterized protein from Mycoplasma pneumoniae (strain ATCC 29342 / M129 / Subtype 1) (Mycoplasmoides pneumoniae).